A 102-amino-acid chain; its full sequence is Large ribosomal subunit protein bL21 (102 aa).

It belongs to the bacterial ribosomal protein bL21 family. In terms of assembly, part of the 50S ribosomal subunit. Contacts protein L20.

Functionally, this protein binds to 23S rRNA in the presence of protein L20. The protein is Large ribosomal subunit protein bL21 of Lawsonia intracellularis.